The following is an 80-amino-acid chain: Large ribosomal subunit protein eL14 (80 aa).

This sequence belongs to the eukaryotic ribosomal protein eL14 family.

The protein is Large ribosomal subunit protein eL14 of Methanocaldococcus jannaschii (strain ATCC 43067 / DSM 2661 / JAL-1 / JCM 10045 / NBRC 100440) (Methanococcus jannaschii).